We begin with the raw amino-acid sequence, 242 residues long: Polycomb group RING finger protein 3 (242 aa).

Residues 17–56 (CRLCSGYLIDATTVTECLHTFCRSCLVKYLEENNTCPTCR) form an RING-type zinc finger. The interval 115-149 (AKQHLDSHRNGETKADDSSNKEAAEEKPEEDNDYH) is disordered. A compositionally biased stretch (basic and acidic residues) spans 117–140 (QHLDSHRNGETKADDSSNKEAAEE). The interaction with BCORL1 stretch occupies residues 132–242 (SSNKEAAEEK…LHYRPKMDLL (111 aa)).

Component of a PRC1-like complex that contains PCGF3, RNF2 and RYBP. Interacts with CBX6, CBX7 and CBX8. Interacts with BCORL1.

It is found in the nucleus. Its subcellular location is the nucleoplasm. In terms of biological role, component of a Polycomb group (PcG) multiprotein PRC1-like complex, a complex class required to maintain the transcriptionally repressive state of many genes, including Hox genes, throughout development. PcG PRC1 complex acts via chromatin remodeling and modification of histones; it mediates monoubiquitination of histone H2A 'Lys-119', rendering chromatin heritably changed in its expressibility. Within the PRC1-like complex, regulates RNF2 ubiquitin ligase activity. Plays a redundant role with PCGF5 as part of a PRC1-like complex that mediates monoubiquitination of histone H2A 'Lys-119' on the X chromosome and is required for normal silencing of one copy of the X chromosome in XX females. In Homo sapiens (Human), this protein is Polycomb group RING finger protein 3 (PCGF3).